Consider the following 193-residue polypeptide: Peptidyl-tRNA hydrolase 1 (193 aa).

Y27 contacts tRNA. H32 acts as the Proton acceptor in catalysis. The tRNA site is built by F80, N82, and N128.

This sequence belongs to the PTH family. Monomer.

The protein localises to the cytoplasm. The catalysed reaction is an N-acyl-L-alpha-aminoacyl-tRNA + H2O = an N-acyl-L-amino acid + a tRNA + H(+). Hydrolyzes ribosome-free peptidyl-tRNAs (with 1 or more amino acids incorporated), which drop off the ribosome during protein synthesis, or as a result of ribosome stalling. In terms of biological role, catalyzes the release of premature peptidyl moieties from peptidyl-tRNA molecules trapped in stalled 50S ribosomal subunits, and thus maintains levels of free tRNAs and 50S ribosomes. This is Peptidyl-tRNA hydrolase 1 from Corynebacterium jeikeium (strain K411).